The following is a 370-amino-acid chain: 3-isopropylmalate dehydrogenase (370 aa).

Positions 99, 109, 137, and 227 each coordinate substrate. Residues Asp-227, Asp-251, and Asp-255 each contribute to the Mg(2+) site. 290–302 (GSAPDIAGQDKAN) lines the NAD(+) pocket.

Belongs to the isocitrate and isopropylmalate dehydrogenases family. LeuB type 1 subfamily. In terms of assembly, homodimer. Requires Mg(2+) as cofactor. Mn(2+) is required as a cofactor.

It is found in the cytoplasm. It catalyses the reaction (2R,3S)-3-isopropylmalate + NAD(+) = 4-methyl-2-oxopentanoate + CO2 + NADH. It functions in the pathway amino-acid biosynthesis; L-leucine biosynthesis; L-leucine from 3-methyl-2-oxobutanoate: step 3/4. Catalyzes the oxidation of 3-carboxy-2-hydroxy-4-methylpentanoate (3-isopropylmalate) to 3-carboxy-4-methyl-2-oxopentanoate. The product decarboxylates to 4-methyl-2 oxopentanoate. The chain is 3-isopropylmalate dehydrogenase from Rhodospirillum rubrum (strain ATCC 11170 / ATH 1.1.1 / DSM 467 / LMG 4362 / NCIMB 8255 / S1).